We begin with the raw amino-acid sequence, 428 residues long: Ribosomal RNA small subunit methyltransferase B (428 aa).

Residues 253–259 (CAAPGGK), Asp276, Asp302, and Asp321 each bind S-adenosyl-L-methionine. Catalysis depends on Cys374, which acts as the Nucleophile.

Belongs to the class I-like SAM-binding methyltransferase superfamily. RsmB/NOP family.

It is found in the cytoplasm. It catalyses the reaction cytidine(967) in 16S rRNA + S-adenosyl-L-methionine = 5-methylcytidine(967) in 16S rRNA + S-adenosyl-L-homocysteine + H(+). Specifically methylates the cytosine at position 967 (m5C967) of 16S rRNA. This Citrobacter koseri (strain ATCC BAA-895 / CDC 4225-83 / SGSC4696) protein is Ribosomal RNA small subunit methyltransferase B.